The sequence spans 783 residues: Galactinol--sucrose galactosyltransferase (783 aa).

This sequence belongs to the glycosyl hydrolases 36 family.

It carries out the reaction alpha-D-galactosyl-(1-&gt;3)-1D-myo-inositol + sucrose = raffinose + myo-inositol. Inhibited by Ag(2)+, Hg(2+), Zn(2+), p-chloromercuribenzoate (pCMB) and 1-deoxygalactonojirimycin. Transglycosidase operating by a ping-pong reaction mechanism. Involved in the synthesis of raffinose, a major soluble carbohydrate in seeds, roots and tubers. Specific for galactinol and p-nitrophenyl-alpha-D-galactoside as galactosyl donors. Able to utilize sucrose, lactose, 4-beta-galactobiose, N-acetyl-D-lactosamine, trehalose and lacto-N-biose as acceptors. May also act as a glycoside hydrolase. This Oryza sativa subsp. japonica (Rice) protein is Galactinol--sucrose galactosyltransferase (RFS).